The following is a 114-amino-acid chain: MRFLNNKHRAKGLKAEEEACEFLKTLGFEMVERNFFSKFGEIDIIALKKGVLHFIEVKSGENFDPIYAITPSKLKKMIKTIRCYFSQKDPNSDFCIDALIVKNGKFELLENITF.

Belongs to the UPF0102 family.

In Helicobacter pylori (strain Shi470), this protein is UPF0102 protein HPSH_02690.